Here is a 392-residue protein sequence, read N- to C-terminus: Putative glutamate--cysteine ligase 2 (392 aa).

The segment at Met-1–Arg-21 is disordered. Residues Ala-9–Ala-19 are compositionally biased toward low complexity.

This sequence belongs to the glutamate--cysteine ligase type 2 family. YbdK subfamily.

It catalyses the reaction L-cysteine + L-glutamate + ATP = gamma-L-glutamyl-L-cysteine + ADP + phosphate + H(+). ATP-dependent carboxylate-amine ligase which exhibits weak glutamate--cysteine ligase activity. In Mycobacterium ulcerans (strain Agy99), this protein is Putative glutamate--cysteine ligase 2.